A 65-amino-acid chain; its full sequence is Large ribosomal subunit protein bL33 (65 aa).

The interval 20-40 is disordered; sequence VPPSEKRSPGVSRYTTEKNRR.

Belongs to the bacterial ribosomal protein bL33 family.

In Prochlorococcus marinus (strain MIT 9211), this protein is Large ribosomal subunit protein bL33.